A 163-amino-acid chain; its full sequence is UPF0262 protein RPE_4483 (163 aa).

It belongs to the UPF0262 family.

This chain is UPF0262 protein RPE_4483, found in Rhodopseudomonas palustris (strain BisA53).